The sequence spans 750 residues: Photosystem I P700 chlorophyll a apoprotein A1 (750 aa).

8 consecutive transmembrane segments (helical) span residues 70–93 (VFSA…FHGA), 156–179 (LYST…FHYH), 195–219 (LNHH…HVSL), 291–309 (TAHH…GHMY), 346–369 (WHAQ…HHMY), 385–411 (LSLF…IFMV), 433–455 (AIIS…LYIH), and 531–549 (FLVH…LILL). [4Fe-4S] cluster contacts are provided by Cys-573 and Cys-582. 2 helical membrane-spanning segments follow: residues 589–610 (HVFL…HFSW) and 664–686 (LSAY…MFLF). Residue His-675 participates in chlorophyll a' binding. Met-683 and Tyr-691 together coordinate chlorophyll a. A phylloquinone-binding site is contributed by Trp-692. The helical transmembrane segment at 724–744 (AVGVAHYLLGGIATTWAFFLA) threads the bilayer.

It belongs to the PsaA/PsaB family. The PsaA/B heterodimer binds the P700 chlorophyll special pair and subsequent electron acceptors. PSI consists of a core antenna complex that captures photons, and an electron transfer chain that converts photonic excitation into a charge separation. The eukaryotic PSI reaction center is composed of at least 11 subunits. P700 is a chlorophyll a/chlorophyll a' dimer, A0 is one or more chlorophyll a, A1 is one or both phylloquinones and FX is a shared 4Fe-4S iron-sulfur center. is required as a cofactor.

It localises to the plastid. The protein resides in the chloroplast thylakoid membrane. It catalyses the reaction reduced [plastocyanin] + hnu + oxidized [2Fe-2S]-[ferredoxin] = oxidized [plastocyanin] + reduced [2Fe-2S]-[ferredoxin]. Its function is as follows. PsaA and PsaB bind P700, the primary electron donor of photosystem I (PSI), as well as the electron acceptors A0, A1 and FX. PSI is a plastocyanin-ferredoxin oxidoreductase, converting photonic excitation into a charge separation, which transfers an electron from the donor P700 chlorophyll pair to the spectroscopically characterized acceptors A0, A1, FX, FA and FB in turn. Oxidized P700 is reduced on the lumenal side of the thylakoid membrane by plastocyanin. The protein is Photosystem I P700 chlorophyll a apoprotein A1 of Marchantia polymorpha (Common liverwort).